The chain runs to 236 residues: tRNA (guanine-N(7)-)-methyltransferase (236 aa).

Residues G54, 77–78 (EI), 110–111 (NA), and L130 contribute to the S-adenosyl-L-methionine site. Residue D133 is part of the active site. 208-210 (TEE) contacts S-adenosyl-L-methionine.

It belongs to the class I-like SAM-binding methyltransferase superfamily. TrmB family.

Its subcellular location is the nucleus. The catalysed reaction is guanosine(46) in tRNA + S-adenosyl-L-methionine = N(7)-methylguanosine(46) in tRNA + S-adenosyl-L-homocysteine. It functions in the pathway tRNA modification; N(7)-methylguanine-tRNA biosynthesis. Its function is as follows. Catalyzes the formation of N(7)-methylguanine at position 46 (m7G46) in tRNA. The polypeptide is tRNA (guanine-N(7)-)-methyltransferase (Bombyx mori (Silk moth)).